The sequence spans 385 residues: Putative nickel insertion protein (385 aa).

The protein belongs to the LarC family.

This Citrifermentans bemidjiense (strain ATCC BAA-1014 / DSM 16622 / JCM 12645 / Bem) (Geobacter bemidjiensis) protein is Putative nickel insertion protein.